Here is a 419-residue protein sequence, read N- to C-terminus: L-rhamnose isomerase (419 aa).

Mn(2+) is bound by residues H262, D294, and D296.

Belongs to the rhamnose isomerase family. Homotetramer. The cofactor is Mn(2+).

The protein localises to the cytoplasm. The enzyme catalyses L-rhamnopyranose = L-rhamnulose. It functions in the pathway carbohydrate degradation; L-rhamnose degradation; glycerone phosphate from L-rhamnose: step 1/3. In terms of biological role, catalyzes the interconversion of L-rhamnose and L-rhamnulose. The polypeptide is L-rhamnose isomerase (Escherichia coli O6:H1 (strain CFT073 / ATCC 700928 / UPEC)).